The sequence spans 529 residues: MTPETVYLPDGQTYTVSPVFGGFGFKSNDLTHAAHFPVGWHIVVHTEEEKIVFQDGSEASVNGEGHAQPAGDDHATAVDAGDGSAQKRKKRVRPFVQPTRQNDTLFISSLSTPSTQEYGPPASPTRQIAMILWVSLYWYFHQREPSPRMSTKASHETPESAKPTGEWRITIQRDGVLRGRNLIPKLERMGLLATESTDVGTSLDDGDETWSNMFVSQRMFWQLPPNLFLFTLKPVKAPSPWPGSSGSPNDSRPGSPVAQGATHLAVRAMSPQPGVARLYNDLPGAPTPTNITAGVSTAHPITPFFSTSHLPTYYPPLTLQYTFTNNLRHPLRPKPPRMGEIFYSRFVPSVGRYLSFRVASLSPEPVPYFGPMGPNPPDHPELACLSDTQLLESWFAKPRVSAFWGKFTPEFLPTVVKLKHSFPAIGLWDGVPFGYFEIYWVKEDILGKVLGGEAGDFDRGLHVMVGEEWARGRASEWMTGLVHWCLTTDMRTMNVCLEPRIDNERILKHLDESGFGRERQLSFPHKQSC.

Disordered stretches follow at residues 59–95 and 239–258; these read ASVN…VRPF and SPWP…SPVA. Residue His-462 coordinates substrate. The active-site Proton acceptor is the Glu-498.

This sequence belongs to the lysine N-acyltransferase mbtK family.

It localises to the cytoplasm. It is found in the cytosol. It participates in siderophore biosynthesis. Functionally, acyltransferase; part of the gene cluster that mediates the biosynthesis of at least 11 siderophores, including beauverichelin A, dimerumic acid (DA), Na-dimethyl coprogen (NADC), eleutherazine B, ferricrocin (FC), fusarinine A, fusarinine C (FsC), metachelin A, mevalonolactone, rhodotorulic acid (RA) and tenellin. This cocktail of siderophores for iron metabolism is essential for virulence, and more specifically for the fungal virulence in penetrating through the host cuticle. Siderophore synthesis is also involved in conidial germination under iron-deficient conditions. SIDL contributes to partial production of ferricrocin under iron-limiting conditions via the acetylation of N(5)-hydroxyornithine. In Beauveria bassiana (strain ARSEF 2860) (White muscardine disease fungus), this protein is N5-hydroxyornithine acetylase sidL.